Consider the following 137-residue polypeptide: Ribosomal RNA small subunit methyltransferase G (137 aa).

S-adenosyl-L-methionine is bound by residues Gly-75, Phe-80, and 126-127; that span reads AE.

Belongs to the methyltransferase superfamily. RNA methyltransferase RsmG family.

Its subcellular location is the cytoplasm. Its function is as follows. Specifically methylates the N7 position of a guanine in 16S rRNA. The protein is Ribosomal RNA small subunit methyltransferase G of Mycoplasma mycoides subsp. mycoides SC (strain CCUG 32753 / NCTC 10114 / PG1).